We begin with the raw amino-acid sequence, 199 residues long: Large ribosomal subunit protein bL25 (199 aa).

The protein belongs to the bacterial ribosomal protein bL25 family. CTC subfamily. Part of the 50S ribosomal subunit; part of the 5S rRNA/L5/L18/L25 subcomplex. Contacts the 5S rRNA. Binds to the 5S rRNA independently of L5 and L18.

This is one of the proteins that binds to the 5S RNA in the ribosome where it forms part of the central protuberance. This chain is Large ribosomal subunit protein bL25, found in Caldanaerobacter subterraneus subsp. tengcongensis (strain DSM 15242 / JCM 11007 / NBRC 100824 / MB4) (Thermoanaerobacter tengcongensis).